Here is a 384-residue protein sequence, read N- to C-terminus: Toluene efflux pump periplasmic linker protein TtgA (384 aa).

A signal peptide spans 1–22 (MQFKPAVTALVSAVALATLLSG). Cys-23 carries the N-palmitoyl cysteine lipid modification. Residue Cys-23 is the site of S-diacylglycerol cysteine attachment. The stretch at 115–155 (LAERYKQLIDEQAVSKQEYDDANAKRLQAEASLKSAQIDLR) forms a coiled coil. The tract at residues 362 to 384 (ATNVKKPAGPDQANAAKADAKAE) is disordered. A compositionally biased stretch (low complexity) spans 368–378 (PAGPDQANAAK).

Belongs to the membrane fusion protein (MFP) (TC 8.A.1) family.

Its subcellular location is the cell inner membrane. In terms of biological role, the periplasmic linker protein component of a constitutive organic solvent efflux system. Involved in export of toluene, styrene, m-xylene, propylbenzene and ethylbenzene. Also exports AMP and the antibiotics carbenicillin, nalidixic acid, chloramphenicol and tetracycline. The protein is Toluene efflux pump periplasmic linker protein TtgA (ttgA) of Pseudomonas putida (strain DOT-T1E).